The chain runs to 483 residues: uncharacterized protein (483 aa).

This is an uncharacterized protein from Acanthamoeba polyphaga mimivirus (APMV).